We begin with the raw amino-acid sequence, 609 residues long: Protein FRIGIDA (609 aa).

The span at M1–P18 shows a compositional bias: low complexity. A disordered region spans residues M1–E31. Coiled coils occupy residues D60–N97 and Q409–E440. 2 disordered regions span residues R454–D488 and S587–K609. The span at Y474–D484 shows a compositional bias: basic and acidic residues. Polar residues predominate over residues L594–K609.

Belongs to the Frigida family. In terms of assembly, homodimer. Component of the transcription activator complex FRI-C composed of FRI, FRL1, SUF4, FLX and FES1. Interacts (via N-terminus) with FRL1 and (via C-terminus) with FLX (via N-terminus), SUF4 (via C-terminus) and FES1 (via C-terminus). Interacts with ASHH2 and RIN1, a component of the SWR1 chromatin-remodeling complex. Interacts with CBP20, FIP1 and FIP2. Expressed in ovules, but not in stamens.

Its subcellular location is the nucleus speckle. Its function is as follows. Required for the regulation of flowering time in the late-flowering phenotype. Involved in the enrichment of a WDR5A-containing COMPASS-like complex at the 'FLOWERING LOCUS C' that trimethylates histone H3 'Lys-4', leading to FLC up-regulation and RNA levels increase. Variants with an early-flowering phenotype (Including cv. Columbia, cv. Landsberg Erecta and cv. Wassilewskija) show loss-of-function mutations of FRI. Able to delay flowering independently of FRL1 activity. Dispensable for the reactivation of FLC in early embryogenesis, but required to maintain high levels of FLC expression in later embryonic and vegetative development. Suppresses the repression of FLC by the autonomous pathway, but has no effect on the expression of the genes involved in this pathway. The chain is Protein FRIGIDA from Arabidopsis thaliana (Mouse-ear cress).